The chain runs to 486 residues: MGTGKKEKSRRIREGDTKDGNLRVKGENFYRDSKRVKFLNMYTSGKEIRNKKGNLIRAASFQDSTIPDARVQPDRRWFGNTRVISQDALQHFRSALGETQKDTYQVLLRRNKLPMSLLEEKDADESPKARILDTESYADAFGPKAQRKRPRLAASNLEDLVKATNEDITKYEEKQVLDATLGLMGNQEDKENGWTSAAKEAIFSKGQSKRIWNELYKVIDSSDVVIHVLDARDPLGTRCKSVEEYMKKETPHKHLIYVLNKCDLVPTWVAAAWVKHLSKERPTLAFHASITNSFGKGSLIQLLRQFSQLHTDRKQISVGFIGYPNTGKSSIINTLRKKKVCQVAPIPGETKVWQYITLMKRIFLIDCPGIVPPSSKDSEEDILFRGVVRVEHVTHPEQYIPGVLKRCQVKHLERTYEISGWKDATEFIEILARKQGRLLKGGEPDESGVSKQILNDFNRGKIPWFVLPPEKEGEEKPKKKEVEKTA.

Positions 1 to 20 (MGTGKKEKSRRIREGDTKDG) are disordered. Residues Ser60, Ser85, and Ser155 each carry the phosphoserine modification. The CP-type G domain maps to 212 to 373 (WNELYKVIDS…LIDCPGIVPP (162 aa)). Residues 322-329 (GYPNTGKS) and 366-370 (DCPGI) contribute to the GTP site.

Belongs to the TRAFAC class YlqF/YawG GTPase family. NOG2 subfamily.

The protein resides in the nucleus. Its subcellular location is the nucleolus. In terms of biological role, GTPase that associates with pre-60S ribosomal subunits in the nucleolus and is required for their nuclear export and maturation. This chain is Nucleolar GTP-binding protein 2 (NOG2), found in Saccharomyces cerevisiae (strain ATCC 204508 / S288c) (Baker's yeast).